The chain runs to 180 residues: Large ribosomal subunit protein uL5 (180 aa).

The protein belongs to the universal ribosomal protein uL5 family. In terms of assembly, part of the 50S ribosomal subunit; part of the 5S rRNA/L5/L18/L25 subcomplex. Contacts the 5S rRNA and the P site tRNA. Forms a bridge to the 30S subunit in the 70S ribosome.

Its function is as follows. This is one of the proteins that bind and probably mediate the attachment of the 5S RNA into the large ribosomal subunit, where it forms part of the central protuberance. In the 70S ribosome it contacts protein S13 of the 30S subunit (bridge B1b), connecting the 2 subunits; this bridge is implicated in subunit movement. Contacts the P site tRNA; the 5S rRNA and some of its associated proteins might help stabilize positioning of ribosome-bound tRNAs. In Oenococcus oeni (strain ATCC BAA-331 / PSU-1), this protein is Large ribosomal subunit protein uL5.